Here is a 736-residue protein sequence, read N- to C-terminus: Subtilisin-like protease SBT4.6 (736 aa).

Positions 1–24 (MATAVSYCLLSCIFALLVVSFASA) are cleaved as a signal peptide. Positions 25–111 (GKDDQDKQVY…VFPSKNLNLQ (87 aa)) are cleaved as a propeptide — activation peptide. The Inhibitor I9 domain occupies 33–110 (VYIVYMGALP…SVFPSKNLNL (78 aa)). The region spanning 115–589 (SWNFMGLKEG…AGHVDPIAAI (475 aa)) is the Peptidase S8 domain. The active-site Charge relay system is Asp-143. An N-linked (GlcNAc...) asparagine glycan is attached at Asn-174. His-204 serves as the catalytic Charge relay system. Asn-227 is a glycosylation site (N-linked (GlcNAc...) asparagine). Residues 362–442 (KYPLVYGKSA…PVSVLSEDDY (81 aa)) enclose the PA domain. Asn-450 is a glycosylation site (N-linked (GlcNAc...) asparagine). The Charge relay system role is filled by Ser-527. 4 N-linked (GlcNAc...) asparagine glycosylation sites follow: Asn-564, Asn-598, Asn-610, and Asn-668.

The protein belongs to the peptidase S8 family. Post-translationally, the C-terminal propeptide is autocleaved.

It localises to the secreted. In Arabidopsis thaliana (Mouse-ear cress), this protein is Subtilisin-like protease SBT4.6.